The chain runs to 257 residues: 3-methyl-2-oxobutanoate hydroxymethyltransferase (257 aa).

2 residues coordinate Mg(2+): Asp42 and Asp86. Residues 42–43 (DS), Asp86, and Lys116 each bind 3-methyl-2-oxobutanoate. Glu118 contributes to the Mg(2+) binding site. The active-site Proton acceptor is the Glu185.

Belongs to the PanB family. As to quaternary structure, homodecamer; pentamer of dimers. Mg(2+) is required as a cofactor.

It is found in the cytoplasm. The catalysed reaction is 3-methyl-2-oxobutanoate + (6R)-5,10-methylene-5,6,7,8-tetrahydrofolate + H2O = 2-dehydropantoate + (6S)-5,6,7,8-tetrahydrofolate. It participates in cofactor biosynthesis; (R)-pantothenate biosynthesis; (R)-pantoate from 3-methyl-2-oxobutanoate: step 1/2. In terms of biological role, catalyzes the reversible reaction in which hydroxymethyl group from 5,10-methylenetetrahydrofolate is transferred onto alpha-ketoisovalerate to form ketopantoate. The polypeptide is 3-methyl-2-oxobutanoate hydroxymethyltransferase (Prochlorococcus marinus (strain AS9601)).